The chain runs to 469 residues: MTEHYDVVVLGAGPGGYVSAIRAAQLGKKVAVIEKQYWGGVCLNVGCIPSKSLIKNAEVAHTFTHEKKTFGINGEVTFNYEDAHKRSRGVSDKIVGGVHYLMKKNKIIEIHGLGNFKDAKTLEVTDGKDAGKTITFDDCIIATGSVVNTLRGVDFSENVVSFEEQILNPVAPKKMVIVGAGAIGMEFAYVLGNYGVDVTVIEFMDRVLPNEDAEVSKVIAKAYKKMGVKLLPGHATTAVRDNGDFVEVDYQKKGSDKTETLTVDRVMVSVGFRPRVEGFGLENTGVKLTERGAIEIDDYMRTNVDGIYAIGDVTAKLQLAHVAEAQGIVAAETIAGAETQTLGDYMMMPRATFCNPQVSSFGYTEEQAKEKWPDREIKVASFPFSANGKAVGLAETDGFAKIVADAEFGELLGAHLVGANASELINELVLAQNWDLTTEEISRSVHIHPTLSEAVKEAAHGISGHMINF.

Residues Glu-34 to Cys-42, Lys-51, and Gly-114 contribute to the FAD site. Cysteines 42 and 47 form a disulfide. Residues Gly-179 to Ile-183, Glu-202, and Ser-269 to Phe-272 contribute to the NAD(+) site. FAD-binding residues include Asp-312 and Ala-320. The active-site Proton acceptor is His-448.

It belongs to the class-I pyridine nucleotide-disulfide oxidoreductase family. As to quaternary structure, homodimer. Part of an unusual ODH/PDH supercomplex, consisting of AceE (E1), AceF (E2), and Lpd (E3) together with OdhA (E1+E2). The cofactor is FAD.

The protein localises to the cytoplasm. The enzyme catalyses N(6)-[(R)-dihydrolipoyl]-L-lysyl-[protein] + NAD(+) = N(6)-[(R)-lipoyl]-L-lysyl-[protein] + NADH + H(+). It participates in carbohydrate metabolism; tricarboxylic acid cycle; succinyl-CoA from 2-oxoglutarate (dehydrogenase route): step 1/1. Its function is as follows. Lipoamide dehydrogenase is an essential component of the pyruvate dehydrogenase (PDH) and 2-oxoglutarate dehydrogenase (ODH) complexes. Catalyzes the reoxidation of dihydrolipoyl groups which are covalently attached to the lipoate acyltransferase components (E2) of the complexes. Also catalyzes a reversible NADH:NAD(+) transhydrogenation, and is able to transfer electrons from NADH to various redox-active compounds and quinones. May be involved in quinone redox cycling in C.glutamicum. This Corynebacterium glutamicum (strain ATCC 13032 / DSM 20300 / JCM 1318 / BCRC 11384 / CCUG 27702 / LMG 3730 / NBRC 12168 / NCIMB 10025 / NRRL B-2784 / 534) protein is Dihydrolipoyl dehydrogenase (lpd).